We begin with the raw amino-acid sequence, 285 residues long: Acetyl-coenzyme A carboxylase carboxyl transferase subunit beta (285 aa).

Positions 33 to 285 constitute a CoA carboxyltransferase N-terminal domain; that stretch reads MWIKCSKCGK…TLGNILRMHS (253 aa). Zn(2+) contacts are provided by Cys37, Cys40, Cys56, and Cys59. Residues 37 to 59 form a C4-type zinc finger; that stretch reads CSKCGKILYKSDVDDNFKVCPKC.

Belongs to the AccD/PCCB family. As to quaternary structure, acetyl-CoA carboxylase is a heterohexamer composed of biotin carboxyl carrier protein (AccB), biotin carboxylase (AccC) and two subunits each of ACCase subunit alpha (AccA) and ACCase subunit beta (AccD). Requires Zn(2+) as cofactor.

The protein resides in the cytoplasm. The enzyme catalyses N(6)-carboxybiotinyl-L-lysyl-[protein] + acetyl-CoA = N(6)-biotinyl-L-lysyl-[protein] + malonyl-CoA. It participates in lipid metabolism; malonyl-CoA biosynthesis; malonyl-CoA from acetyl-CoA: step 1/1. Component of the acetyl coenzyme A carboxylase (ACC) complex. Biotin carboxylase (BC) catalyzes the carboxylation of biotin on its carrier protein (BCCP) and then the CO(2) group is transferred by the transcarboxylase to acetyl-CoA to form malonyl-CoA. The sequence is that of Acetyl-coenzyme A carboxylase carboxyl transferase subunit beta from Clostridium acetobutylicum (strain ATCC 824 / DSM 792 / JCM 1419 / IAM 19013 / LMG 5710 / NBRC 13948 / NRRL B-527 / VKM B-1787 / 2291 / W).